The chain runs to 282 residues: MGQKVNPHGFRLGITTNHVSHWFADSNKAGQRYKDFVREDIKIRQLMSTGMERAGIAKVEIERTRDRVRVDIHTARPGIVIGRRGAEADRIRGELEKLTGKQVQLNILEVKNPEMEAQLVAQGIAEQLSSRVAFRRAMKKAMQSAQRAGAKGIRVQCSGRLGGAEMSRSEFYREGRVPLHTLRAQIDYGFFEAKTTFGRIGVKVWIYKGDVTAKELAQQAASAPSRGRAPRRDGDDRGPRRENSGPRRDGGNLRSQRNDRNENAAVEAAPAAAAVATEGSDA.

Positions 43–111 (IRQLMSTGME…QVQLNILEVK (69 aa)) constitute a KH type-2 domain. The interval 218 to 282 (QQAASAPSRG…AAVATEGSDA (65 aa)) is disordered. The segment covering 230 to 262 (PRRDGDDRGPRRENSGPRRDGGNLRSQRNDRNE) has biased composition (basic and acidic residues). Residues 263-276 (NAAVEAAPAAAAVA) are compositionally biased toward low complexity.

Belongs to the universal ribosomal protein uS3 family. Part of the 30S ribosomal subunit. Forms a tight complex with proteins S10 and S14.

In terms of biological role, binds the lower part of the 30S subunit head. Binds mRNA in the 70S ribosome, positioning it for translation. This chain is Small ribosomal subunit protein uS3, found in Renibacterium salmoninarum (strain ATCC 33209 / DSM 20767 / JCM 11484 / NBRC 15589 / NCIMB 2235).